The chain runs to 118 residues: Co-chaperonin GroES (118 aa).

This sequence belongs to the GroES chaperonin family. As to quaternary structure, heptamer of 7 subunits arranged in a ring. Interacts with the chaperonin GroEL.

The protein resides in the cytoplasm. Together with the chaperonin GroEL, plays an essential role in assisting protein folding. The GroEL-GroES system forms a nano-cage that allows encapsulation of the non-native substrate proteins and provides a physical environment optimized to promote and accelerate protein folding. GroES binds to the apical surface of the GroEL ring, thereby capping the opening of the GroEL channel. The chain is Co-chaperonin GroES from Helicobacter pylori (strain P12).